A 384-amino-acid chain; its full sequence is Probable L-tyrosine/L-aspartate decarboxylase (384 aa).

K233 bears the N6-(pyridoxal phosphate)lysine mark.

It belongs to the group II decarboxylase family. MfnA subfamily. Pyridoxal 5'-phosphate is required as a cofactor.

The enzyme catalyses L-tyrosine + H(+) = tyramine + CO2. It carries out the reaction L-aspartate + H(+) = beta-alanine + CO2. The protein operates within cofactor biosynthesis; methanofuran biosynthesis. It functions in the pathway cofactor biosynthesis; coenzyme A biosynthesis. In terms of biological role, catalyzes the decarboxylation of L-tyrosine to produce tyramine for methanofuran biosynthesis. Can also catalyze the decarboxylation of L-aspartate to produce beta-alanine for coenzyme A (CoA) biosynthesis. The polypeptide is Probable L-tyrosine/L-aspartate decarboxylase (Methanococcus maripaludis (strain C5 / ATCC BAA-1333)).